The chain runs to 126 residues: Large ribosomal subunit protein bL19 (126 aa).

This sequence belongs to the bacterial ribosomal protein bL19 family.

Its function is as follows. This protein is located at the 30S-50S ribosomal subunit interface and may play a role in the structure and function of the aminoacyl-tRNA binding site. This is Large ribosomal subunit protein bL19 from Bradyrhizobium diazoefficiens (strain JCM 10833 / BCRC 13528 / IAM 13628 / NBRC 14792 / USDA 110).